Reading from the N-terminus, the 364-residue chain is Medium-wave-sensitive opsin 1 (364 aa).

The tract at residues 1–23 (MTQPWGPQMLAGGQPPESHEDST) is disordered. The Extracellular portion of the chain corresponds to 1 to 52 (MTQPWGPQMLAGGQPPESHEDSTQASIFTYTNSNSTRGPFEGPNFHIAPRWV). Residues 17-43 (ESHEDSTQASIFTYTNSNSTRGPFEGP) form a required for 11-cis-retinal regeneration region. N-linked (GlcNAc...) asparagine glycosylation is present at Asn34. A helical membrane pass occupies residues 53 to 77 (YHLTSAWMILVVIASVFTNGLVLVA). Residues 78-89 (TMRFKKLRHPLN) lie on the Cytoplasmic side of the membrane. The chain crosses the membrane as a helical span at residues 90–115 (WILVNLAVADLAETVIASTISVVNQF). Residues 116–129 (YGYFVLGHPLCVVE) are Extracellular-facing. A disulfide bridge links Cys126 with Cys203. A helical transmembrane segment spans residues 130-149 (GYTVSLCGITGLWSLAIISW). Over 150–168 (ERWLVVCKPFGNVRFDAKL) the chain is Cytoplasmic. Residues 169 to 192 (AIAGIAFSWIWAAVWTAPPIFGWS) traverse the membrane as a helical segment. Residues 193-218 (RYWPYGLKTSCGPDVFSGTSYPGVQS) are Extracellular-facing. The chain crosses the membrane as a helical span at residues 219-246 (YMMVLMVTCCIIPLSVIVLCYLQVWMAI). Residues 247 to 268 (RTVAKQQKESESTQKAEKEVTR) are Cytoplasmic-facing. Residues 269–292 (MVVVMVFAYCLCWGPYTFFACFAT) traverse the membrane as a helical segment. Topologically, residues 293-300 (AHPGYSFH) are extracellular. A helical membrane pass occupies residues 301–325 (PLVAAIPSYFAKSATIYNPIIYVFM). At Lys312 the chain carries N6-(retinylidene)lysine. At 326–364 (NRQFRNCILQLFGKKVEDSSELSSASRTEASSVSSVSPA) the chain is on the cytoplasmic side.

Belongs to the G-protein coupled receptor 1 family. Opsin subfamily. Monomer. Homodimer. Homotetramer. O-glycosylated. In terms of processing, phosphorylated on some or all of the serine and threonine residues present in the C-terminal region. Expressed in cone photoreceptor cells.

It is found in the membrane. In terms of biological role, visual pigments are the light-absorbing molecules that mediate vision. They consist of an apoprotein, opsin, covalently linked to cis-retinal. May increase spectral sensitivity in dim light. The polypeptide is Medium-wave-sensitive opsin 1 (OPN1MW) (Oryctolagus cuniculus (Rabbit)).